Reading from the N-terminus, the 115-residue chain is NADH-ubiquinone oxidoreductase chain 3 (115 aa).

3 helical membrane-spanning segments follow: residues 3-23 (VMLALLTNTLLSTLLVLIAFW), 55-75 (FFLVAITFLLFDLEIALLLPL), and 84-104 (LPTMLTMALLLISLLAASLAY).

The protein belongs to the complex I subunit 3 family. In terms of assembly, core subunit of respiratory chain NADH dehydrogenase (Complex I) which is composed of 45 different subunits. Interacts with TMEM186. Interacts with TMEM242.

Its subcellular location is the mitochondrion inner membrane. It catalyses the reaction a ubiquinone + NADH + 5 H(+)(in) = a ubiquinol + NAD(+) + 4 H(+)(out). Core subunit of the mitochondrial membrane respiratory chain NADH dehydrogenase (Complex I) which catalyzes electron transfer from NADH through the respiratory chain, using ubiquinone as an electron acceptor. Essential for the catalytic activity of complex I. The chain is NADH-ubiquinone oxidoreductase chain 3 from Felis catus (Cat).